A 356-amino-acid polypeptide reads, in one-letter code: MKHKLIDDELKYLDERSRDIFRHIVEAYLNDGGPVGSRNLSRLLRQTLSPATIRNVMSDLEHLGLIYAPHVSAGRMPTQSGLRFFVDAFMEAGDLPNEERENIEAQVKEAGHAQSVEHFLVQASQVLSDLSRGAGLVLATKHEGTLKHIEFVRLDGEHALAVLVTQQGGVENRIVHLPEGVTHAQLTEATNFLNAHIQGLTLSEAKEEIARLCSETRAALDHLSHHLVETGLALWGGEGADHKIRLIVRGRSNLLEDVKAEEDLKRLRHLFDDLETRESMAQLLDLTDEGSGVRIFIGSENKLFSLSGSSLVVAPYRDSQQKVIGALGVIGPTRLNYARIVPMVDYTAQLVSQLLR.

Belongs to the HrcA family.

In terms of biological role, negative regulator of class I heat shock genes (grpE-dnaK-dnaJ and groELS operons). Prevents heat-shock induction of these operons. This is Heat-inducible transcription repressor HrcA from Bartonella henselae (strain ATCC 49882 / DSM 28221 / CCUG 30454 / Houston 1) (Rochalimaea henselae).